A 242-amino-acid polypeptide reads, in one-letter code: UPF0173 metal-dependent hydrolase APE_1117 (242 aa).

This sequence belongs to the UPF0173 family.

This is UPF0173 metal-dependent hydrolase APE_1117 from Aeropyrum pernix (strain ATCC 700893 / DSM 11879 / JCM 9820 / NBRC 100138 / K1).